Consider the following 154-residue polypeptide: Ribonuclease H (154 aa).

Positions 1-142 (MLKKIDLYTD…CDELAREAAS (142 aa)) constitute an RNase H type-1 domain. Mg(2+)-binding residues include aspartate 10, glutamate 48, aspartate 70, and aspartate 134. Positions 133-154 (CDELAREAASGKQLAEDTGYQP) are disordered.

Belongs to the RNase H family. In terms of assembly, monomer. It depends on Mg(2+) as a cofactor.

It localises to the cytoplasm. It carries out the reaction Endonucleolytic cleavage to 5'-phosphomonoester.. Endonuclease that specifically degrades the RNA of RNA-DNA hybrids. The sequence is that of Ribonuclease H from Aeromonas hydrophila subsp. hydrophila (strain ATCC 7966 / DSM 30187 / BCRC 13018 / CCUG 14551 / JCM 1027 / KCTC 2358 / NCIMB 9240 / NCTC 8049).